The primary structure comprises 214 residues: tRNA (guanine-N(7)-)-methyltransferase (214 aa).

S-adenosyl-L-methionine contacts are provided by E43, E68, D95, and D117. D117 is a catalytic residue. Substrate-binding positions include K121, D153, and 191-194; that span reads TEYE.

It belongs to the class I-like SAM-binding methyltransferase superfamily. TrmB family.

It carries out the reaction guanosine(46) in tRNA + S-adenosyl-L-methionine = N(7)-methylguanosine(46) in tRNA + S-adenosyl-L-homocysteine. It participates in tRNA modification; N(7)-methylguanine-tRNA biosynthesis. Functionally, catalyzes the formation of N(7)-methylguanine at position 46 (m7G46) in tRNA. This chain is tRNA (guanine-N(7)-)-methyltransferase, found in Brevibacillus brevis (strain 47 / JCM 6285 / NBRC 100599).